Here is a 69-residue protein sequence, read N- to C-terminus: uncharacterized protein (69 aa).

The first 18 residues, 1 to 18, serve as a signal peptide directing secretion; it reads MAMLWISMFIIMRKYGRS. Positions 17 to 69 are disordered; the sequence is RSSSSSSSSSSSSSSSSSSSSSSSSSSSSSSSSSSSSSSSSGSSSNSNRVVVV. The segment covering 18–61 has biased composition (low complexity); sequence SSSSSSSSSSSSSSSSSSSSSSSSSSSSSSSSSSSSSSSSGSSS.

The protein resides in the secreted. This is an uncharacterized protein from Dictyostelium discoideum (Social amoeba).